We begin with the raw amino-acid sequence, 846 residues long: Envelope glycoprotein gp160 (846 aa).

Residues 1-21 form the signal peptide; that stretch reads MSGKIQLLVAFLLTSACLIYC. Topologically, residues 22 to 671 are extracellular; sequence TKYVTVFYGV…LTSWIKYIQY (650 aa). Asparagine 36 is a glycosylation site (N-linked (GlcNAc...) asparagine; by host). Cysteine 43 and cysteine 56 form a disulfide bridge. Asparagine 69, asparagine 113, asparagine 132, asparagine 142, asparagine 157, asparagine 184, asparagine 197, asparagine 229, asparagine 232, asparagine 239, asparagine 263, asparagine 269, asparagine 280, asparagine 291, asparagine 301, asparagine 357, asparagine 363, asparagine 390, asparagine 400, asparagine 455, and asparagine 458 each carry an N-linked (GlcNAc...) asparagine; by host glycan. 5 disulfide bridges follow: cysteine 100–cysteine 205, cysteine 107–cysteine 196, cysteine 112–cysteine 154, cysteine 218–cysteine 248, and cysteine 228–cysteine 240. The interval 112 to 153 is V1; sequence CNASTESAVATTSPSGPDMINDTDPCIQLNNCSGLREEDMVE. Residues 154 to 196 form a V2 region; it reads CQFNMTGLELDKKKQYSETWYSKDVVCESDNSTDRKRCYMNHC. The tract at residues 296-329 is V3; it reads CRRPENKTVVPITLMSGRRFHSQKIINKKPRQAW. Cysteine 296 and cysteine 330 form a disulfide bridge. 2 disulfide bridges follow: cysteine 382–cysteine 438 and cysteine 389–cysteine 411. Positions 389 to 411 are V4; the sequence is CNMTWFLNWVENKTGQQHNYVPC. The tract at residues 454–461 is V5; the sequence is DNRTNITF. Residues 504–524 are fusion peptide; it reads GVLVLGFLGFLTTAGAAMGAA. Residues 567–583 are immunosuppression; that stretch reads LQARVTAIEKYLADQAR. N-linked (GlcNAc...) asparagine; by host glycans are attached at residues asparagine 603, asparagine 612, and asparagine 628. Positions 616–643 form a coiled coil; the sequence is QEWEHKIRFLEANISESLEQAQIQQEKN. The interval 649-670 is MPER; binding to GalCer; that stretch reads KLNSWDVFGNWFDLTSWIKYIQ. A helical membrane pass occupies residues 672-692; it reads GVMIVVGIVALRIVIYVVQML. The Cytoplasmic portion of the chain corresponds to 693 to 846; sequence SRLRKGYRPV…IRQGAEIALL (154 aa). The YXXV motif; contains endocytosis signal motif lies at 699 to 702; that stretch reads YRPV. A lipid anchor (S-palmitoyl cysteine; by host) is attached at cysteine 765. The short motif at 845–846 is the Di-leucine internalization motif element; that stretch reads LL.

The mature envelope protein (Env) consists of a homotrimer of non-covalently associated gp120-gp41 heterodimers. The resulting complex protrudes from the virus surface as a spike. There seems to be as few as 10 spikes on the average virion. Interacts with human CD4, CCR5 and CXCR4, to form a P4HB/PDI-CD4-CXCR4-gp120 complex. Gp120 also interacts with the C-type lectins CD209/DC-SIGN and CLEC4M/DC-SIGNR (collectively referred to as DC-SIGN(R)). Gp120 and gp41 interact with GalCer. As to quaternary structure, the mature envelope protein (Env) consists of a homotrimer of non-covalently associated gp120-gp41 heterodimers. The resulting complex protrudes from the virus surface as a spike. There seems to be as few as 10 spikes on the average virion. In terms of processing, specific enzymatic cleavages in vivo yield mature proteins. Envelope glycoproteins are synthesized as an inactive precursor that is heavily N-glycosylated and processed likely by host cell furin in the Golgi to yield the mature SU and TM proteins. The cleavage site between SU and TM requires the minimal sequence [KR]-X-[KR]-R. Palmitoylation of the transmembrane protein and of Env polyprotein (prior to its proteolytic cleavage) is essential for their association with host cell membrane lipid rafts. Palmitoylation is therefore required for envelope trafficking to classical lipid rafts, but not for viral replication.

It is found in the virion membrane. Its subcellular location is the host cell membrane. The protein resides in the host endosome membrane. In terms of biological role, the surface protein gp120 (SU) attaches the virus to the host lymphoid cell by binding to the primary receptor CD4. This interaction induces a structural rearrangement creating a high affinity binding site for a chemokine coreceptor like CXCR4 and/or CCR5. This peculiar 2 stage receptor-interaction strategy allows gp120 to maintain the highly conserved coreceptor-binding site in a cryptic conformation, protected from neutralizing antibodies. Since CD4 also displays a binding site for the disulfide-isomerase P4HB/PDI, a P4HB/PDI-CD4-CXCR4-gp120 complex may form. In that complex, P4HB/PDI could reach and reduce gp120 disulfide bonds, causing major conformational changes in gp120. TXN, another PDI family member could also be involved in disulfide rearrangements in Env during fusion. These changes are transmitted to the transmembrane protein gp41 and are thought to activate its fusogenic potential by unmasking its fusion peptide. Functionally, the surface protein gp120 is a ligand for CD209/DC-SIGN and CLEC4M/DC-SIGNR, which are respectively found on dendritic cells (DCs), and on endothelial cells of liver sinusoids and lymph node sinuses. These interactions allow capture of viral particles at mucosal surfaces by these cells and subsequent transmission to permissive cells. DCs are professional antigen presenting cells, critical for host immunity by inducing specific immune responses against a broad variety of pathogens. They act as sentinels in various tissues where they take up antigen, process it, and present it to T-cells following migration to lymphoid organs. HIV subverts the migration properties of dendritic cells to gain access to CD4+ T-cells in lymph nodes. Virus transmission to permissive T-cells occurs either in trans (without DCs infection, through viral capture and transmission), or in cis (following DCs productive infection, through the usual CD4-gp120 interaction), thereby inducing a robust infection. In trans infection, bound virions remain infectious over days and it is proposed that they are not degraded, but protected in non-lysosomal acidic organelles within the DCs close to the cell membrane thus contributing to the viral infectious potential during DCs' migration from the periphery to the lymphoid tissues. On arrival at lymphoid tissues, intact virions recycle back to DCs' cell surface allowing virus transmission to CD4+ T-cells. Virion capture also seems to lead to MHC-II-restricted viral antigen presentation, and probably to the activation of HIV-specific CD4+ cells. Its function is as follows. The transmembrane protein gp41 (TM) acts as a class I viral fusion protein. Under the current model, the protein has at least 3 conformational states: pre-fusion native state, pre-hairpin intermediate state, and post-fusion hairpin state. During fusion of viral and target intracellular membranes, the coiled coil regions (heptad repeats) assume a trimer-of-hairpins structure, positioning the fusion peptide in close proximity to the C-terminal region of the ectodomain. The formation of this structure appears to drive apposition and subsequent fusion of viral and target cell membranes. Complete fusion occurs in host cell endosomes and is dynamin-dependent, however some lipid transfer might occur at the plasma membrane. The virus undergoes clathrin-dependent internalization long before endosomal fusion, thus minimizing the surface exposure of conserved viral epitopes during fusion and reducing the efficacy of inhibitors targeting these epitopes. Membranes fusion leads to delivery of the nucleocapsid into the cytoplasm. The envelope glycoprotein gp160 precursor down-modulates cell surface CD4 antigen by interacting with it in the endoplasmic reticulum and blocking its transport to the cell surface. In terms of biological role, the gp120-gp41 heterodimer seems to contribute to T-cell depletion during HIV-1 infection. The envelope glycoproteins expressed on the surface of infected cells induce apoptosis through an interaction with uninfected cells expressing the receptor (CD4) and the coreceptors CXCR4 or CCR5. This type of bystander killing may be obtained by at least three distinct mechanisms. First, the interaction between the 2 cells can induce cellular fusion followed by nuclear fusion within the syncytium. Syncytia are condemned to die from apoptosis. Second, the 2 interacting cells may not fuse entirely and simply exchange plasma membrane lipids, after a sort of hemifusion process, followed by rapid death. Third, it is possible that virus-infected cells, on the point of undergoing apoptosis, fuse with CD4-expressing cells, in which case apoptosis is rapidly transmitted from one cell to the other and thus occurs in a sort of contagious fashion. Functionally, the gp120-gp41 heterodimer allows rapid transcytosis of the virus through CD4 negative cells such as simple epithelial monolayers of the intestinal, rectal and endocervical epithelial barriers. Both gp120 and gp41 specifically recognize glycosphingolipids galactosyl-ceramide (GalCer) or 3' sulfo-galactosyl-ceramide (GalS) present in the lipid rafts structures of epithelial cells. Binding to these alternative receptors allows the rapid transcytosis of the virus through the epithelial cells. This transcytotic vesicle-mediated transport of virions from the apical side to the basolateral side of the epithelial cells does not involve infection of the cells themselves. The protein is Envelope glycoprotein gp160 (env) of Human immunodeficiency virus type 2 subtype A (isolate SBLISY) (HIV-2).